A 485-amino-acid polypeptide reads, in one-letter code: Glutamyl-tRNA(Gln) amidotransferase subunit A (485 aa).

Active-site charge relay system residues include K79 and S154. Catalysis depends on S178, which acts as the Acyl-ester intermediate.

Belongs to the amidase family. GatA subfamily. As to quaternary structure, heterotrimer of A, B and C subunits.

The enzyme catalyses L-glutamyl-tRNA(Gln) + L-glutamine + ATP + H2O = L-glutaminyl-tRNA(Gln) + L-glutamate + ADP + phosphate + H(+). Functionally, allows the formation of correctly charged Gln-tRNA(Gln) through the transamidation of misacylated Glu-tRNA(Gln) in organisms which lack glutaminyl-tRNA synthetase. The reaction takes place in the presence of glutamine and ATP through an activated gamma-phospho-Glu-tRNA(Gln). The sequence is that of Glutamyl-tRNA(Gln) amidotransferase subunit A from Clostridium botulinum (strain Eklund 17B / Type B).